Reading from the N-terminus, the 226-residue chain is Putative N-acetylmannosamine-6-phosphate 2-epimerase (226 aa).

This sequence belongs to the NanE family.

The enzyme catalyses an N-acyl-D-glucosamine 6-phosphate = an N-acyl-D-mannosamine 6-phosphate. The protein operates within amino-sugar metabolism; N-acetylneuraminate degradation; D-fructose 6-phosphate from N-acetylneuraminate: step 3/5. In terms of biological role, converts N-acetylmannosamine-6-phosphate (ManNAc-6-P) to N-acetylglucosamine-6-phosphate (GlcNAc-6-P). The chain is Putative N-acetylmannosamine-6-phosphate 2-epimerase from Mycoplasma mycoides subsp. mycoides SC (strain CCUG 32753 / NCTC 10114 / PG1).